The sequence spans 86 residues: Large ribosomal subunit protein eL43 (86 aa).

The Zn(2+) site is built by cysteine 38, cysteine 41, cysteine 57, and cysteine 60. The segment at 38–60 (CPFCGSTGTVRRVSVGVWSCRKC) adopts a C4-type zinc-finger fold.

It belongs to the eukaryotic ribosomal protein eL43 family. Putative zinc-binding subfamily. In terms of assembly, part of the 50S ribosomal subunit. The cofactor is Zn(2+).

Its function is as follows. Binds to the 23S rRNA. The protein is Large ribosomal subunit protein eL43 of Aeropyrum pernix (strain ATCC 700893 / DSM 11879 / JCM 9820 / NBRC 100138 / K1).